The chain runs to 255 residues: 1-acyl-sn-glycerol-3-phosphate acyltransferase (255 aa).

The HXXXXD motif motif lies at 78–83; that stretch reads HVSWLD.

The protein belongs to the 1-acyl-sn-glycerol-3-phosphate acyltransferase family.

Its subcellular location is the cell inner membrane. The enzyme catalyses a 1-acyl-sn-glycero-3-phosphate + an acyl-CoA = a 1,2-diacyl-sn-glycero-3-phosphate + CoA. It participates in phospholipid metabolism; CDP-diacylglycerol biosynthesis; CDP-diacylglycerol from sn-glycerol 3-phosphate: step 2/3. Converts lysophosphatidic acid (LPA) into phosphatidic acid by incorporating acyl moiety at the 2 position. This chain is 1-acyl-sn-glycerol-3-phosphate acyltransferase (plsC), found in Neisseria meningitidis serogroup B (strain ATCC BAA-335 / MC58).